Reading from the N-terminus, the 364-residue chain is MKKNLMLIFGGVSFEHEISLRSAYGIYSSLLKLDKYNVFSVFVDKVTGIWYLLDSVPSSAELIKRHTTSIVNFIPGCGIFVNNKSLEIDVIFPIIHGRTGEDGAIQGFVKMMDIPCVGAGILGSAISINKYFCKVLLKSFNIPVVSFIGFKKDDYILNKEGIKEDINNKLNYPVIVKPSVLGSSIGINVAYNVSQIEKYIEEAFEYDLTVVVEKFIKAREIECAVIGNDQIKIFTPGEIVVQDFIFYDYDAKYSTVPGDSIVFNIPAHLDMKHLLDIKEYAFLTYKYLELRGMARIDFLISKDTNLLYVNEVNTIPGFTDISMFAKMCEHDGLSYESLVDKLITLAFESYKKRKDKIDFTRLES.

Residues 134–344 form the ATP-grasp domain; the sequence is KVLLKSFNIP…YESLVDKLIT (211 aa). 167–222 is an ATP binding site; sequence NNKLNYPVIVKPSVLGSSIGINVAYNVSQIEKYIEEAFEYDLTVVVEKFIKAREIE. The Mg(2+) site is built by aspartate 297, glutamate 311, and asparagine 313.

This sequence belongs to the D-alanine--D-alanine ligase family. Mg(2+) is required as a cofactor. Requires Mn(2+) as cofactor.

It is found in the cytoplasm. It catalyses the reaction 2 D-alanine + ATP = D-alanyl-D-alanine + ADP + phosphate + H(+). Its pathway is cell wall biogenesis; peptidoglycan biosynthesis. Functionally, cell wall formation. The polypeptide is D-alanine--D-alanine ligase (Borrelia duttonii (strain Ly)).